The primary structure comprises 599 residues: Aspartate--tRNA(Asp/Asn) ligase (599 aa).

Residue glutamate 174 coordinates L-aspartate. The segment at 198 to 201 (QLFK) is aspartate. An L-aspartate-binding site is contributed by arginine 220. Residues 220–222 (RDE) and glutamine 229 each bind ATP. Histidine 457 lines the L-aspartate pocket. Glutamate 491 is an ATP binding site. Arginine 498 contributes to the L-aspartate binding site. Position 543–546 (543–546 (GLDR)) interacts with ATP.

The protein belongs to the class-II aminoacyl-tRNA synthetase family. Type 1 subfamily. Homodimer.

The protein localises to the cytoplasm. The enzyme catalyses tRNA(Asx) + L-aspartate + ATP = L-aspartyl-tRNA(Asx) + AMP + diphosphate. Functionally, aspartyl-tRNA synthetase with relaxed tRNA specificity since it is able to aspartylate not only its cognate tRNA(Asp) but also tRNA(Asn). Reaction proceeds in two steps: L-aspartate is first activated by ATP to form Asp-AMP and then transferred to the acceptor end of tRNA(Asp/Asn). This is Aspartate--tRNA(Asp/Asn) ligase from Paraburkholderia xenovorans (strain LB400).